Consider the following 247-residue polypeptide: Transmembrane protein 33 (247 aa).

Ala-2 carries the N-acetylalanine modification. The Lumenal portion of the chain corresponds to 2 to 31 (ADTTPNGPQGAGAVQFMMTNKLDTAMWLSR). Residues 32–52 (LFTVYCSALFVLPLLGLHEAA) form a helical membrane-spanning segment. Residues 53–100 (SFYQRALLANALTSALRLHQRLPHFQLSRAFLAQALLEDSCHYLLYSL) are Cytoplasmic-facing. Residues 101-121 (IFVNSYPVTMSIFPVLLFSLL) traverse the membrane as a helical segment. Over 122 to 155 (HAATYTKKVLDAKGSNSLPLLRSFLDKLSTNQQN) the chain is Lumenal. A helical transmembrane segment spans residues 156–176 (ILKFIACNEIFLMPATVFMLF). Topologically, residues 177–247 (SGQGSLLQPF…FISRLAPTVA (71 aa)) are cytoplasmic.

This sequence belongs to the PER33/POM33 family. As to quaternary structure, interacts with EIF2AK3. Interacts with RTN1, RTN2, RTN3, RTN4 and ARL6IP1. Interacts with RNF5. Interacts with RNF26. Interacts with PKD2.

The protein resides in the endoplasmic reticulum membrane. The protein localises to the melanosome. Its subcellular location is the nucleus envelope. Its function is as follows. Acts as a regulator of the tubular endoplasmic reticulum (ER) network by modulating intracellular calcium homeostasis. Mechanistically, stimulates PKD2 calcium-dependent activity. Suppresses the RTN3/4-induced formation of the ER tubules. Positively regulates PERK-mediated and IRE1-mediated unfolded protein response signaling. Plays an essential role in VEGF-mediated release of Ca(2+) from ER stores during angiogenesis. Also plays a role in the modulation of innate immune signaling through the cGAS-STING pathway by interacting with RNF26. Participates in lipid metabolism by acting as a downstream effector of the pyruvate kinase/PKM. Forms a complex with RNF5 to facilitate polyubiquitination and subsequent degradation of SCAP on the ER membrane. This chain is Transmembrane protein 33 (Tmem33), found in Mus musculus (Mouse).